Here is a 600-residue protein sequence, read N- to C-terminus: Putative acetyltransferase MPN_114 (600 aa).

His323 functions as the Proton acceptor in the catalytic mechanism. 396–409 (TKPLIKAKGIKNSE) contributes to the CoA binding site.

This sequence belongs to the carnitine/choline acetyltransferase family.

The protein is Putative acetyltransferase MPN_114 of Mycoplasma pneumoniae (strain ATCC 29342 / M129 / Subtype 1) (Mycoplasmoides pneumoniae).